The primary structure comprises 153 residues: Probable inactive ribonuclease-like protein 13 (153 aa).

The N-terminal stretch at 1–22 is a signal peptide; sequence MAPDVAWLLVLPLVFRPTLVTG.

This sequence belongs to the pancreatic ribonuclease family.

The protein localises to the secreted. Does not exhibit any ribonuclease activity. This Mus musculus (Mouse) protein is Probable inactive ribonuclease-like protein 13 (Rnase13).